The primary structure comprises 283 residues: Daunorubicin resistance ABC transporter permease protein DrrB1 (283 aa).

The region spanning 53-280 (VQLIDIVLMP…PLTMRLYRNK (228 aa)) is the ABC transmembrane type-2 domain. A run of 6 helical transmembrane segments spans residues 58–78 (IVLM…GAFA), 85–105 (LQFY…VYTG), 150–170 (VFLG…VVGA), 171–191 (MLVL…LGVV), 198–218 (VSGT…IFVM), and 252–272 (FWDV…FAPL).

Belongs to the ABC-2 integral membrane protein family. As to quaternary structure, the complex is probably composed of two ATP-binding proteins (DrrA1) and two transmembrane proteins (DrrB1).

The protein resides in the cell membrane. Part of the ABC transporter complex DrrA1B1 involved in daunorubicin efflux. Responsible for the translocation of the substrate across the membrane. Confers self-resistance to daunorubicin, an antibiotic produced by S.coeruleorubidus. The chain is Daunorubicin resistance ABC transporter permease protein DrrB1 from Streptomyces coeruleorubidus.